Reading from the N-terminus, the 201-residue chain is MITIRKAEFVTSAVNIKGYPELTGPEIALAGRSNVGKSSLINKFINRRNLARTGNTPGKTQMLNFYRINDQWSFVDLPGYGYAKVSKEIKANWGKMMEEYFSRRENLRAVIQVVDIRHVPSVEDQEMHAFLRNRGIPVLVVATKADKISKGQWGKHLSQIAKALHIPDWHIIITYSAETGLGVPELHEAVEEILSMDNEDS.

The EngB-type G domain occupies 23–196 (TGPEIALAGR…HEAVEEILSM (174 aa)). GTP is bound by residues 31–38 (GRSNVGKS), 58–62 (GKTQM), 76–79 (DLPG), 143–146 (TKAD), and 175–177 (YSA). Residues S38 and T60 each contribute to the Mg(2+) site.

It belongs to the TRAFAC class TrmE-Era-EngA-EngB-Septin-like GTPase superfamily. EngB GTPase family. The cofactor is Mg(2+).

Necessary for normal cell division and for the maintenance of normal septation. The sequence is that of Probable GTP-binding protein EngB from Desulfitobacterium hafniense (strain DSM 10664 / DCB-2).